A 131-amino-acid chain; its full sequence is Methylglyoxal synthase (131 aa).

One can recognise an MGS-like domain in the interval 1–131; sequence MKIALIAHDK…GDLDYRKLRK (131 aa). Residues H8, K12, 34–37, and 54–55 contribute to the substrate site; these read TGTT and SG. D60 serves as the catalytic Proton donor/acceptor. H87 serves as a coordination point for substrate.

Belongs to the methylglyoxal synthase family.

It carries out the reaction dihydroxyacetone phosphate = methylglyoxal + phosphate. Functionally, catalyzes the formation of methylglyoxal from dihydroxyacetone phosphate. The polypeptide is Methylglyoxal synthase (Bacillus cereus (strain AH820)).